The primary structure comprises 96 residues: Large ribosomal subunit protein eL14 (96 aa).

The protein belongs to the eukaryotic ribosomal protein eL14 family.

In Sulfolobus acidocaldarius (strain ATCC 33909 / DSM 639 / JCM 8929 / NBRC 15157 / NCIMB 11770), this protein is Large ribosomal subunit protein eL14.